The primary structure comprises 77 residues: Conotoxin PnMEKL-04 (77 aa).

The N-terminal stretch at 1-19 is a signal peptide; the sequence is MEKLTILLLVAAVLMSTQA. Residues 20 to 45 constitute a propeptide that is removed on maturation; sequence LPQGGGENRLKENIKFLLKRKTAADR. Intrachain disulfides connect Cys51/Cys65, Cys58/Cys69, and Cys64/Cys73.

This sequence belongs to the conotoxin O2 superfamily. Expressed by the venom duct.

The protein resides in the secreted. The chain is Conotoxin PnMEKL-04 from Conus pennaceus (Feathered cone).